The following is a 295-amino-acid chain: Acetyl-coenzyme A carboxylase carboxyl transferase subunit beta (295 aa).

Residues 25–294 enclose the CoA carboxyltransferase N-terminal domain; the sequence is VWTKCTSCEQ…PFNAEELSDT (270 aa). Zn(2+) contacts are provided by cysteine 29, cysteine 32, cysteine 48, and cysteine 51. The segment at 29-51 adopts a C4-type zinc-finger fold; that stretch reads CTSCEQVLYRDELKRHLEVCPKC.

The protein belongs to the AccD/PCCB family. Acetyl-CoA carboxylase is a heterohexamer composed of biotin carboxyl carrier protein (AccB), biotin carboxylase (AccC) and two subunits each of ACCase subunit alpha (AccA) and ACCase subunit beta (AccD). Zn(2+) serves as cofactor.

The protein resides in the cytoplasm. It catalyses the reaction N(6)-carboxybiotinyl-L-lysyl-[protein] + acetyl-CoA = N(6)-biotinyl-L-lysyl-[protein] + malonyl-CoA. It functions in the pathway lipid metabolism; malonyl-CoA biosynthesis; malonyl-CoA from acetyl-CoA: step 1/1. In terms of biological role, component of the acetyl coenzyme A carboxylase (ACC) complex. Biotin carboxylase (BC) catalyzes the carboxylation of biotin on its carrier protein (BCCP) and then the CO(2) group is transferred by the transcarboxylase to acetyl-CoA to form malonyl-CoA. This chain is Acetyl-coenzyme A carboxylase carboxyl transferase subunit beta, found in Mannheimia succiniciproducens (strain KCTC 0769BP / MBEL55E).